A 1202-amino-acid chain; its full sequence is Adenine-specific methyltransferase PglX (1202 aa).

It belongs to the methyltransferase superfamily. PglX adenine methyltransferase family.

The enzyme catalyses a 2'-deoxyadenosine in DNA + S-adenosyl-L-methionine = an N(6)-methyl-2'-deoxyadenosine in DNA + S-adenosyl-L-homocysteine + H(+). In terms of biological role, BREX systems (bacteriophage exclusion) provide immunity against bacteriophage. Part of a type 1 BREX system which protects against dsDNA phage. This system allows phage adsorption but prevents phage DNA replication, without degradation of the phage DNA. Methylation of bacterial DNA by this protein guides self/non-self discrimination. Functionally, probably methylates the adenine in the fifth position of the hexamer 5'-ACRCAG-3' in genomic DNA. N(6)-methylated adenine on the fifth position of 5'-ACRCAG-3' is found in the genome; there are 1906 sites in the genomic DNA. This chain is Adenine-specific methyltransferase PglX, found in Lacticaseibacillus casei (strain Zhang) (Lactobacillus casei).